We begin with the raw amino-acid sequence, 242 residues long: MANVSMRDMLKAGVHFGHQTRFWNPKMKPYIFGARNKIHIINLEKTVPMFNDALSYMQHVASNKGKILFVGTKRAAAEAVKEAAINCGQYYVNHRWLGGMLTNWKTVRQSIKRLKDLETMSQDGTFEKLTKKEALVNTREMEKLEKGLGGIKNMGGLPDVLFVIDADHEHISIKEANNLGIPVVSVVDTNSNPDGVDYIVPGNDDAIRAVQLYLNTAAEAVKEARTAQVEAKDSDDFVEATE.

It belongs to the universal ribosomal protein uS2 family.

The protein is Small ribosomal subunit protein uS2 of Idiomarina loihiensis (strain ATCC BAA-735 / DSM 15497 / L2-TR).